We begin with the raw amino-acid sequence, 403 residues long: Aurora kinase A (403 aa).

The segment at 1 to 125 (MDRSKENCIS…SKQKNEESKK (125 aa)) is disordered. Composition is skewed to polar residues over residues 27 to 83 (VTQQ…QATS) and 91 to 101 (PLNNTQKSKQP). 2 positions are modified to phosphoserine: serine 41 and serine 51. Residues 114 to 125 (LASKQKNEESKK) show a composition bias toward basic and acidic residues. The Protein kinase domain maps to 133 to 383 (FEIGRPLGKG…LREVLEHPWI (251 aa)). Residues lysine 143, lysine 162, and 211 to 213 (EYA) each bind ATP. Aspartate 256 acts as the Proton acceptor in catalysis. A Glycyl lysine isopeptide (Lys-Gly) (interchain with G-Cter in SUMO2) cross-link involves residue lysine 258. Residues 260–261 (EN) and aspartate 274 each bind ATP. Residues 280-293 (HAPSSRRTTLCGTL) are activation segment. Residues threonine 287 and threonine 288 each carry the phosphothreonine modification. Serine 342 is modified (phosphoserine; by PKA and PAK).

Belongs to the protein kinase superfamily. Ser/Thr protein kinase family. Aurora subfamily. As to quaternary structure, part of a complex composed of NEDD9, AURKA and CTTN; within the complex NEDD9 acts as a scaffold protein and is required for complex formation. Identified in a complex with AUNIP and NIN. Interacts with FBXL7. Interacts with CPEB1, JTB, TACC1, TPX2, PPP2CA, as well as with the protein phosphatase type 1 (PP1) isoforms PPP1CA, PPP1CB and PPP1CC. Also interacts with its substrates ARHGEF2, BORA, KIF2A, PARD3, and p53/TP53. Interaction with BORA promotes phosphorylation of PLK1. Interacts with CIMAP3. Interacts with GADD45A, competing with its oligomerization. Interacts (via C-terminus) with AUNIP (via C-terminus). Interacts with FRY; this interaction facilitates AURKA-mediated PLK1 phosphorylation. Interacts with SIRT2. Interacts with MYCN; interaction is phospho-independent and triggers AURKA activation; AURKA competes with FBXW7 for binding to unphosphorylated MYCN but not for binding to phosphorylated MYCN. Interacts with HNRNPU. Interacts with AAAS. Interacts with KLHL18 and CUL3. Interacts with FOXP1. Interacts with HDAC6; AURKA-mediated phosphorylation of HDAC6 promotes deacetylation of alpha-tubulin. In terms of processing, activated by phosphorylation at Thr-288; this brings about a change in the conformation of the activation segment. Phosphorylation at Thr-288 varies during the cell cycle and is highest during M phase. Autophosphorylated at Thr-288 upon TPX2 binding. Thr-288 can be phosphorylated by several kinases, including PAK and PKA. Protein phosphatase type 1 (PP1) binds AURKA and inhibits its activity by dephosphorylating Thr-288 during mitosis. Phosphorylation at Ser-342 decreases the kinase activity. PPP2CA controls degradation by dephosphorylating Ser-51 at the end of mitosis. Ubiquitinated by the E3 ubiquitin-protein ligase complex SCF(FBXL7) during mitosis, leading to its degradation by the proteasome. Ubiquitinated by CHFR, leading to its degradation by the proteasome. Ubiquitinated by the anaphase-promoting complex (APC), leading to its degradation by the proteasome. Ubiquitinated by the CUL3-KLHL18 ligase leading to its activation at the centrosome which is required for initiating mitotic entry. Ubiquitination mediated by CUL3-KLHL18 ligase does not lead to its degradation by the proteasome. Highly expressed in testis and weakly in skeletal muscle, thymus and spleen. Also highly expressed in colon, ovarian, prostate, neuroblastoma, breast and cervical cancer cell lines.

The protein localises to the cytoplasm. Its subcellular location is the cytoskeleton. The protein resides in the microtubule organizing center. It localises to the centrosome. It is found in the spindle pole. The protein localises to the centriole. Its subcellular location is the cell projection. The protein resides in the neuron projection. It localises to the cilium. It is found in the cilium basal body. The protein localises to the basolateral cell membrane. It carries out the reaction L-seryl-[protein] + ATP = O-phospho-L-seryl-[protein] + ADP + H(+). The catalysed reaction is L-threonyl-[protein] + ATP = O-phospho-L-threonyl-[protein] + ADP + H(+). With respect to regulation, activation of CDK1, appears to be an upstream event of AURKA activation. Phosphatase inhibitor-2 (PPP1R2) and TPX2 act also as activators. Inactivated by the G2 checkpoint. Inhibited by GADD45A and p53/TP53, and through dephosphorylation by protein phosphatase type 1 (PP1). MLN8054 is also a potent and selective inhibitor. Activated during the early phase of cilia disassembly in the presence of CIMAP3. Inhibited by the small molecule inhibitor VX-680. Functionally, mitotic serine/threonine kinase that contributes to the regulation of cell cycle progression. Associates with the centrosome and the spindle microtubules during mitosis and plays a critical role in various mitotic events including the establishment of mitotic spindle, centrosome duplication, centrosome separation as well as maturation, chromosomal alignment, spindle assembly checkpoint, and cytokinesis. Required for normal spindle positioning during mitosis and for the localization of NUMA1 and DCTN1 to the cell cortex during metaphase. Required for initial activation of CDK1 at centrosomes. Phosphorylates numerous target proteins, including ARHGEF2, BORA, BRCA1, CDC25B, DLGP5, HDAC6, KIF2A, LATS2, NDEL1, PARD3, PPP1R2, PLK1, RASSF1, TACC3, p53/TP53 and TPX2. Phosphorylates MCRS1 which is required for MCRS1-mediated kinetochore fiber assembly and mitotic progression. Regulates KIF2A tubulin depolymerase activity. Important for microtubule formation and/or stabilization. Required for normal axon formation. Plays a role in microtubule remodeling during neurite extension. Also acts as a key regulatory component of the p53/TP53 pathway, and particularly the checkpoint-response pathways critical for oncogenic transformation of cells, by phosphorylating and destabilizing p53/TP53. Phosphorylates its own inhibitors, the protein phosphatase type 1 (PP1) isoforms, to inhibit their activity. Inhibits cilia outgrowth. Required for cilia disassembly via phosphorylation of HDAC6 and subsequent deacetylation of alpha-tubulin. Regulates protein levels of the anti-apoptosis protein BIRC5 by suppressing the expression of the SCF(FBXL7) E3 ubiquitin-protein ligase substrate adapter FBXL7 through the phosphorylation of the transcription factor FOXP1. The polypeptide is Aurora kinase A (Homo sapiens (Human)).